We begin with the raw amino-acid sequence, 197 residues long: Xanthine phosphoribosyltransferase (197 aa).

Xanthine contacts are provided by leucine 20 and asparagine 27. Residue 128-132 participates in 5-phospho-alpha-D-ribose 1-diphosphate binding; it reads ANGQA. Position 156 (lysine 156) interacts with xanthine.

It belongs to the purine/pyrimidine phosphoribosyltransferase family. Xpt subfamily. In terms of assembly, homodimer.

The protein localises to the cytoplasm. The catalysed reaction is XMP + diphosphate = xanthine + 5-phospho-alpha-D-ribose 1-diphosphate. The protein operates within purine metabolism; XMP biosynthesis via salvage pathway; XMP from xanthine: step 1/1. Its function is as follows. Converts the preformed base xanthine, a product of nucleic acid breakdown, to xanthosine 5'-monophosphate (XMP), so it can be reused for RNA or DNA synthesis. The protein is Xanthine phosphoribosyltransferase of Bacillus cereus (strain G9842).